The chain runs to 756 residues: Glutathione biosynthesis bifunctional protein GshAB (756 aa).

The interval 1 to 338 (MNYRELMQKK…TGDIFNEQVA (338 aa)) is glutamate--cysteine ligase. The ATP-grasp domain maps to 493–751 (KKILSAAGFH…LTMDVLKLLY (259 aa)). 520-578 (LRYANKAFVVKPKSTNYGLGITIFKEGASLEDFTEALRIAFKEDTAVLIEEFLPGTEYR) contributes to the ATP binding site. D700, E721, and N723 together coordinate Mg(2+). D700, E721, and N723 together coordinate Mn(2+).

This sequence in the N-terminal section; belongs to the glutamate--cysteine ligase type 1 family. Type 2 subfamily. Monomer. Requires Mg(2+) as cofactor. Mn(2+) serves as cofactor.

It carries out the reaction L-cysteine + L-glutamate + ATP = gamma-L-glutamyl-L-cysteine + ADP + phosphate + H(+). The catalysed reaction is gamma-L-glutamyl-L-cysteine + glycine + ATP = glutathione + ADP + phosphate + H(+). The protein operates within sulfur metabolism; glutathione biosynthesis; glutathione from L-cysteine and L-glutamate: step 1/2. Its pathway is sulfur metabolism; glutathione biosynthesis; glutathione from L-cysteine and L-glutamate: step 2/2. In terms of biological role, synthesizes glutathione from L-glutamate and L-cysteine via gamma-L-glutamyl-L-cysteine. The chain is Glutathione biosynthesis bifunctional protein GshAB from Enterococcus faecalis (strain ATCC 700802 / V583).